Consider the following 2462-residue polypeptide: Serine/threonine-protein kinase Wnk (2462 aa).

Disordered regions lie at residues 18–133 (NRAR…ASKS), 146–248 (NTLP…KSSS), and 365–461 (EDDV…DDDP). Polar residues-rich tracts occupy residues 29–58 (DGTT…NIQK) and 65–78 (NRSA…NPTS). Positions 94 to 124 (TLSAHTSTSSTTSIQSSPIEPASSLPTLNTT) are enriched in low complexity. Polar residues predominate over residues 146–155 (NTLPGKTASS). 3 stretches are compositionally biased toward basic and acidic residues: residues 190–205 (QSRE…KIEP), 237–247 (DTKKMEARKSS), and 396–413 (QSEK…KAES). The span at 414–452 (SEASAEEAAVTGSSTDASASPLPSTSLVSTTSSATSITK) shows a compositional bias: low complexity. The Protein kinase domain maps to 471–729 (FKYDKEVGRG…CNELLESEFF (259 aa)). ATP contacts are provided by residues Ser481, 551–554 (TELM), and Lys601. Asp618 serves as the catalytic Proton acceptor. Residues Ser628 and Ser632 each carry the phosphoserine; by autocatalysis modification. Disordered regions lie at residues 844-873 (LQKQ…DGVK), 893-923 (LALS…QPVQ), and 1006-1055 (PQQQ…LQQQ). Over residues 855 to 870 (VDEDEEEEEESEDEED) the composition is skewed to acidic residues. The segment covering 893-918 (LALSTNSVEPQQLSTRSNTSIPNSGI) has biased composition (polar residues). 2 stretches are compositionally biased toward low complexity: residues 1006–1034 (PQQQ…QPQT) and 1041–1055 (HEQQ…LQQQ). The stretch at 1142-1178 (AQHQLQQLQQQQLQQQQLQQQQQIQQQQLQQQQLQQQ) forms a coiled coil. The segment covering 1236–1251 (QGGQVTLSDAQQQQHP) has biased composition (polar residues). Disordered regions lie at residues 1236–1256 (QGGQ…FSAV), 1322–1382 (QQQQ…EQIS), 1418–1465 (GALE…PKLS), 1554–1578 (LTRQ…SDIT), 1615–1699 (NIPN…KDKK), 1762–1790 (DTSE…GNQG), 1828–1895 (QASP…SVGS), 1929–1966 (HEKQ…SINQ), and 2122–2229 (THVQ…FIQS). The span at 1559–1568 (STFRSHQRHR) shows a compositional bias: basic residues. The segment covering 1627-1641 (STPPTTTSTMSSSST) has biased composition (low complexity). Residues 1642–1674 (ASRDAPNSSNDVTIGSGSVSRKTSTASEYTSLS) are compositionally biased toward polar residues. Polar residues-rich tracts occupy residues 1828-1852 (QASP…TKPN), 1861-1894 (SVGQ…NSVG), and 1943-1966 (SATS…SINQ). Residues 2125 to 2136 (QQPSNLQPQQQS) are compositionally biased toward low complexity. Over residues 2137-2160 (VHPNMTQQPQQTPLNGHPSMVNTL) the composition is skewed to polar residues. Positions 2161–2211 (QQQPPQQSLPMQTIQSQQQQHNQMPIISQQQQQQILMQQQQQQGSQQGSQQ) are enriched in low complexity. Polar residues predominate over residues 2212-2229 (FNLPGTQQTHPQHQFIQS).

Belongs to the protein kinase superfamily. Ser/Thr protein kinase family. WNK subfamily. It depends on Mg(2+) as a cofactor. Autophosphorylated. Autophosphorylation at Ser-628 and Ser-632 promotes its activity.

The protein resides in the cytoplasm. The enzyme catalyses L-seryl-[protein] + ATP = O-phospho-L-seryl-[protein] + ADP + H(+). It carries out the reaction L-threonyl-[protein] + ATP = O-phospho-L-threonyl-[protein] + ADP + H(+). Activated in response to hyperosmotic stress: cell shrinkage promotes formation of a membraneless compartment that concentrates wnk-1 with its downstrem substrates. Activation requires autophosphorylation. Autophosphorylation and subsequent activation is inhibited by increases in intracellular Cl(-) or K(+). In terms of biological role, serine/threonine-protein kinase component of the WNK-SPAK/OSR1 kinase cascade, which plays an important role in the regulation of electrolyte homeostasis and regulatory volume increase in response to hyperosmotic stress. Wnk mediates regulatory volume increase in response to hyperosmotic stress by acting as a molecular crowding sensor, which senses cell shrinkage and mediates formation of a membraneless compartment by undergoing liquid-liquid phase separation. The membraneless compartment concentrates Wnk with its substrate Fray, promoting Wnk-dependent phosphorylation and activation of downstream kinase Fray. Following activation, Fray catalyzes phosphorylation of ion cotransporters Ncc69 and Irk1, regulating their activity. Phosphorylation of Na-K-Cl cotransporter Ncc69 promotes its activation and ion influx. Involved in circadian rhythms in small ventral lateral (sLNv) pacemaker neurons: in the morning, Wnk activity is repressed by high levels of intracellular chloride; in contrast Wnk activation in the evening promotes the activation of the inwardly rectifying potassium channel Irk1 via Fray. Acts as a positive regulator of the canonical Wnt signaling pathway during wing disk development. This Drosophila melanogaster (Fruit fly) protein is Serine/threonine-protein kinase Wnk.